A 105-amino-acid chain; its full sequence is Pyrimidine/purine nucleoside phosphorylase (105 aa).

The protein belongs to the nucleoside phosphorylase PpnP family.

It carries out the reaction a purine D-ribonucleoside + phosphate = a purine nucleobase + alpha-D-ribose 1-phosphate. It catalyses the reaction adenosine + phosphate = alpha-D-ribose 1-phosphate + adenine. The enzyme catalyses cytidine + phosphate = cytosine + alpha-D-ribose 1-phosphate. The catalysed reaction is guanosine + phosphate = alpha-D-ribose 1-phosphate + guanine. It carries out the reaction inosine + phosphate = alpha-D-ribose 1-phosphate + hypoxanthine. It catalyses the reaction thymidine + phosphate = 2-deoxy-alpha-D-ribose 1-phosphate + thymine. The enzyme catalyses uridine + phosphate = alpha-D-ribose 1-phosphate + uracil. The catalysed reaction is xanthosine + phosphate = alpha-D-ribose 1-phosphate + xanthine. Functionally, catalyzes the phosphorolysis of diverse nucleosides, yielding D-ribose 1-phosphate and the respective free bases. Can use uridine, adenosine, guanosine, cytidine, thymidine, inosine and xanthosine as substrates. Also catalyzes the reverse reactions. The protein is Pyrimidine/purine nucleoside phosphorylase of Wolinella succinogenes (strain ATCC 29543 / DSM 1740 / CCUG 13145 / JCM 31913 / LMG 7466 / NCTC 11488 / FDC 602W) (Vibrio succinogenes).